Consider the following 162-residue polypeptide: G/U mismatch-specific DNA glycosylase (162 aa).

Belongs to the uracil-DNA glycosylase (UDG) superfamily. TDG/mug family. As to quaternary structure, binds DNA as a monomer.

Its subcellular location is the cytoplasm. The catalysed reaction is Specifically hydrolyzes mismatched double-stranded DNA and polynucleotides, releasing free uracil.. In terms of biological role, excises ethenocytosine and uracil, which can arise by alkylation or deamination of cytosine, respectively, from the corresponding mispairs with guanine in ds-DNA. It is capable of hydrolyzing the carbon-nitrogen bond between the sugar-phosphate backbone of the DNA and the mispaired base. The complementary strand guanine functions in substrate recognition. Required for DNA damage lesion repair in stationary-phase cells. The protein is G/U mismatch-specific DNA glycosylase of Serratia proteamaculans (strain 568).